The primary structure comprises 1349 residues: DNA-directed RNA polymerase subunit beta' (1349 aa).

The Zn(2+) site is built by cysteine 70, cysteine 72, cysteine 85, and cysteine 88. The Mg(2+) site is built by aspartate 460, aspartate 462, and aspartate 464. Residues cysteine 801, cysteine 875, cysteine 882, and cysteine 885 each contribute to the Zn(2+) site.

Belongs to the RNA polymerase beta' chain family. The RNAP catalytic core consists of 2 alpha, 1 beta, 1 beta' and 1 omega subunit. When a sigma factor is associated with the core the holoenzyme is formed, which can initiate transcription. It depends on Mg(2+) as a cofactor. Zn(2+) is required as a cofactor.

The catalysed reaction is RNA(n) + a ribonucleoside 5'-triphosphate = RNA(n+1) + diphosphate. Its function is as follows. DNA-dependent RNA polymerase catalyzes the transcription of DNA into RNA using the four ribonucleoside triphosphates as substrates. This is DNA-directed RNA polymerase subunit beta' from Desulfotalea psychrophila (strain LSv54 / DSM 12343).